The following is a 202-amino-acid chain: LexA repressor (202 aa).

A DNA-binding region (H-T-H motif) is located at residues 28-48 (RAEIAQRLGFRSPNAAEEHLK). Residues Ser119 and Lys156 each act as for autocatalytic cleavage activity in the active site.

It belongs to the peptidase S24 family. As to quaternary structure, homodimer.

The enzyme catalyses Hydrolysis of Ala-|-Gly bond in repressor LexA.. Represses a number of genes involved in the response to DNA damage (SOS response), including recA and lexA. Binds to the 16 bp palindromic sequence 5'-CTGTATATATATACAG-3'. In the presence of single-stranded DNA, RecA interacts with LexA causing an autocatalytic cleavage which disrupts the DNA-binding part of LexA, leading to derepression of the SOS regulon and eventually DNA repair. This is LexA repressor from Escherichia fergusonii (strain ATCC 35469 / DSM 13698 / CCUG 18766 / IAM 14443 / JCM 21226 / LMG 7866 / NBRC 102419 / NCTC 12128 / CDC 0568-73).